Reading from the N-terminus, the 111-residue chain is Phosphoribosyl-ATP pyrophosphatase (111 aa).

Belongs to the PRA-PH family.

The protein resides in the cytoplasm. It carries out the reaction 1-(5-phospho-beta-D-ribosyl)-ATP + H2O = 1-(5-phospho-beta-D-ribosyl)-5'-AMP + diphosphate + H(+). It participates in amino-acid biosynthesis; L-histidine biosynthesis; L-histidine from 5-phospho-alpha-D-ribose 1-diphosphate: step 2/9. The protein is Phosphoribosyl-ATP pyrophosphatase of Pseudomonas putida (strain W619).